The following is a 307-amino-acid chain: Putative S-adenosyl-L-methionine-dependent methyltransferase Mflv_5025 (307 aa).

Residues aspartate 130 and 159–160 contribute to the S-adenosyl-L-methionine site; that span reads DL.

This sequence belongs to the UPF0677 family.

Its function is as follows. Exhibits S-adenosyl-L-methionine-dependent methyltransferase activity. The protein is Putative S-adenosyl-L-methionine-dependent methyltransferase Mflv_5025 of Mycolicibacterium gilvum (strain PYR-GCK) (Mycobacterium gilvum (strain PYR-GCK)).